Here is a 173-residue protein sequence, read N- to C-terminus: Shikimate kinase 1 (173 aa).

14–19 (GAGKST) contributes to the ATP binding site. A Mg(2+)-binding site is contributed by serine 18. Substrate is bound by residues aspartate 36, arginine 60, and glycine 82. Arginine 120 contacts ATP. Arginine 140 contributes to the substrate binding site. Glutamine 157 contacts ATP.

It belongs to the shikimate kinase family. As to quaternary structure, monomer. It depends on Mg(2+) as a cofactor.

The protein resides in the cytoplasm. It catalyses the reaction shikimate + ATP = 3-phosphoshikimate + ADP + H(+). It participates in metabolic intermediate biosynthesis; chorismate biosynthesis; chorismate from D-erythrose 4-phosphate and phosphoenolpyruvate: step 5/7. In terms of biological role, catalyzes the specific phosphorylation of the 3-hydroxyl group of shikimic acid using ATP as a cosubstrate. The sequence is that of Shikimate kinase 1 from Salmonella typhimurium (strain LT2 / SGSC1412 / ATCC 700720).